A 448-amino-acid polypeptide reads, in one-letter code: Homogentisate 1,2-dioxygenase (448 aa).

H303 functions as the Proton acceptor in the catalytic mechanism. Residues H346 and E352 each coordinate Fe cation. Residues Y361 and H382 each contribute to the homogentisate site. H382 serves as a coordination point for Fe cation.

The protein belongs to the homogentisate dioxygenase family. In terms of assembly, hexamer; dimer of trimers. Requires Fe cation as cofactor.

It carries out the reaction homogentisate + O2 = 4-maleylacetoacetate + H(+). The protein operates within amino-acid degradation; L-phenylalanine degradation; acetoacetate and fumarate from L-phenylalanine: step 4/6. Involved in the catabolism of homogentisate (2,5-dihydroxyphenylacetate or 2,5-OH-PhAc), a central intermediate in the degradation of phenylalanine and tyrosine. Catalyzes the oxidative ring cleavage of the aromatic ring of homogentisate to yield maleylacetoacetate. This is Homogentisate 1,2-dioxygenase from Rhodopseudomonas palustris (strain HaA2).